The following is a 388-amino-acid chain: Dual-specificity RNA methyltransferase RlmN (388 aa).

Glu109 (proton acceptor) is an active-site residue. The Radical SAM core domain maps to 115 to 354 (EDDRATLCVS…TIVRKTRGDD (240 aa)). The cysteines at positions 122 and 359 are disulfide-linked. [4Fe-4S] cluster is bound by residues Cys129, Cys133, and Cys136. S-adenosyl-L-methionine is bound by residues 183–184 (GE), Ser215, 237–239 (SLH), and Asn316. Catalysis depends on Cys359, which acts as the S-methylcysteine intermediate.

The protein belongs to the radical SAM superfamily. RlmN family. Requires [4Fe-4S] cluster as cofactor.

It localises to the cytoplasm. It carries out the reaction adenosine(2503) in 23S rRNA + 2 reduced [2Fe-2S]-[ferredoxin] + 2 S-adenosyl-L-methionine = 2-methyladenosine(2503) in 23S rRNA + 5'-deoxyadenosine + L-methionine + 2 oxidized [2Fe-2S]-[ferredoxin] + S-adenosyl-L-homocysteine. It catalyses the reaction adenosine(37) in tRNA + 2 reduced [2Fe-2S]-[ferredoxin] + 2 S-adenosyl-L-methionine = 2-methyladenosine(37) in tRNA + 5'-deoxyadenosine + L-methionine + 2 oxidized [2Fe-2S]-[ferredoxin] + S-adenosyl-L-homocysteine. Functionally, specifically methylates position 2 of adenine 2503 in 23S rRNA and position 2 of adenine 37 in tRNAs. m2A2503 modification seems to play a crucial role in the proofreading step occurring at the peptidyl transferase center and thus would serve to optimize ribosomal fidelity. This chain is Dual-specificity RNA methyltransferase RlmN, found in Salmonella typhi.